The primary structure comprises 2410 residues: Genome polyprotein 1 (2410 aa).

A disordered region spans residues 1–21 (MEQTLAQAVSRRNKTDTPMAE). One can recognise a Helicase ATP-binding domain in the interval 474–632 (AMADANNCWS…AARKYPLHVE (159 aa)). 487–494 (GHTGSGKS) is an ATP binding site. The DEAH box signature appears at 583–586 (DEAH). The Helicase C-terminal domain maps to 647 to 813 (GGGDLLDISK…NVPFYMNETF (167 aa)). Y1234 carries the post-translational modification O-(5'-phospho-RNA)-tyrosine. The Peptidase C4 domain occupies 1359–1573 (ITLEASTGIL…CGYASHTALF (215 aa)). Active-site for nuclear inclusion protein A activity residues include H1404, D1440, and C1507. One can recognise a RdRp catalytic domain in the interval 1857–1980 (WLHGSGDGSR…AISPQFDEEF (124 aa)). Residues 2175–2200 (MPTEDDGKLKTPSGARIPSSAADGNW) form a disordered region.

It belongs to the bymoviruses polyprotein 1 family. VPg is uridylylated by the polymerase and is covalently attached to the 5'-end of the genomic RNA. This uridylylated form acts as a nucleotide-peptide primer for the polymerase. In terms of processing, the viral RNA1 of bymoviruses is expressed as a single polyprotein which undergoes post-translational proteolytic processing by the main proteinase NIa-pro resulting in the production of at least eight individual proteins.

The protein localises to the host cytoplasmic vesicle. It is found in the virion. It catalyses the reaction RNA(n) + a ribonucleoside 5'-triphosphate = RNA(n+1) + diphosphate. The catalysed reaction is Hydrolyzes glutaminyl bonds, and activity is further restricted by preferences for the amino acids in P6 - P1' that vary with the species of potyvirus, e.g. Glu-Xaa-Xaa-Tyr-Xaa-Gln-|-(Ser or Gly) for the enzyme from tobacco etch virus. The natural substrate is the viral polyprotein, but other proteins and oligopeptides containing the appropriate consensus sequence are also cleaved.. In terms of biological role, indispensable for virus replication. Functionally, mediates the cap-independent, EIF4E-dependent translation of viral genomic RNAs. Binds to the cap-binding site of host EIF4E and thus interferes with the host EIF4E-dependent mRNA export and translation. VPg-RNA directly binds EIF4E and is a template for transcription. Also forms trimeric complexes with EIF4E-EIF4G, which are templates for translation. Has RNA-binding and proteolytic activities. Its function is as follows. An RNA-dependent RNA polymerase that plays an essential role in the virus replication. This chain is Genome polyprotein 1, found in Hordeum vulgare (Barley).